The following is a 427-amino-acid chain: Peptidyl-prolyl cis-trans isomerase sig-7 (427 aa).

A PPIase cyclophilin-type domain is found at 6 to 161 (ETTLGDLIID…KDIRISHTIV (156 aa)). Residues 195-227 (DEKEDEDEGKTAEEIAEELQQREMAEQAQILEM) adopt a coiled-coil conformation. The RRM domain maps to 241 to 319 (NVLFVCKLNP…RRIHVDFSQS (79 aa)). Over residues 322–334 (QNYKYKPKSQQQE) the composition is skewed to polar residues. The interval 322 to 427 (QNYKYKPKSQ…RSPDRRRDRR (106 aa)) is disordered. Positions 351 to 370 (SHQRSPSPRRRRSPSPKKDK) are enriched in basic residues. Residues 384–427 (SSDNHRDRDRSYRDNNRDRRDNHRDSDRDRRRHDRSPDRRRDRR) show a composition bias toward basic and acidic residues.

This sequence belongs to the cyclophilin-type PPIase family. PPIL4 subfamily. Interacts with ama-1, the catalytic subunit of the RNA polymerase II (RNA pol II) complex. As to expression, ubiquitous.

Its subcellular location is the nucleus. The protein localises to the nucleoplasm. It localises to the chromosome. It carries out the reaction [protein]-peptidylproline (omega=180) = [protein]-peptidylproline (omega=0). Functionally, probable PPIase that accelerates the folding of proteins. It catalyzes the cis-trans isomerization of proline imidic peptide bonds in oligopeptides. Involved in RNA polymerase II (RNA pol II)-mediated transcription elongation, and in primary transcript splicing, including co-transcriptional trans-splicing, in association with the catalytic subunit of the RNA pol II complex ama-1. Also plays a role in the regulation of elongation-dependent phosphorylation of ama-1 to control transcription. Involved in the transcription of several genes during embryogenesis and in particular, of genes related to developmental processes such as gastrulation, and also regulates transcription in germ cells from embryogenesis to adulthood. In Caenorhabditis elegans, this protein is Peptidyl-prolyl cis-trans isomerase sig-7.